We begin with the raw amino-acid sequence, 304 residues long: Protein pxr1 (304 aa).

The segment covering 1–11 (MGLAAPRKKTK) has biased composition (basic residues). Disordered regions lie at residues 1–25 (MGLA…SRST), 144–238 (NATA…DTET), and 256–276 (TSLL…MGRR). Over residues 15 to 25 (DPNNTSWSRST) the composition is skewed to polar residues. The G-patch domain maps to 25–79 (TDGFGHRILKAQGWTPGDFLGARNATHSDLFTTASASHIRVVLKDDTLGLGARPK). Basic and acidic residues-rich tracts occupy residues 154–170 (LRVD…HENG) and 204–238 (GKEM…DTET). The span at 256-266 (TSLLASNGPST) shows a compositional bias: polar residues.

It belongs to the PINX1 family.

It is found in the nucleus. It localises to the nucleolus. Involved in rRNA-processing at A0, A1 and A2 sites and negatively regulates telomerase. The polypeptide is Protein pxr1 (pxr1) (Aspergillus fumigatus (strain ATCC MYA-4609 / CBS 101355 / FGSC A1100 / Af293) (Neosartorya fumigata)).